Reading from the N-terminus, the 191-residue chain is Calcium-activated potassium channel subunit beta-1 (191 aa).

Residues 1 to 18 are Cytoplasmic-facing; the sequence is MVKKLVMAQKRGETRALC. A helical membrane pass occupies residues 19 to 39; sequence LGVTMVVCAVITYYILVTTVL. The Extracellular segment spans residues 40–157; it reads PLYQKSVWTQ…FQRLYGPQAL (118 aa). N-linked (GlcNAc...) asparagine glycosylation is found at asparagine 80 and asparagine 142. The chain crosses the membrane as a helical span at residues 158–178; that stretch reads LFSLFWPTFLLTGGLLIIAMV. The Cytoplasmic segment spans residues 179-191; that stretch reads KSNQYLSILAAQK.

Belongs to the KCNMB (TC 8.A.14.1) family. KCNMB1 subfamily. In terms of assembly, interacts with KCNMA1 tetramer. There are probably 4 molecules of KCMNB1 per KCNMA1 tetramer. In terms of processing, N-glycosylated. As to expression, abundantly expressed in smooth muscle. Low levels of expression in most other tissues. Within the brain, relatively high levels found in hippocampus and corpus callosum.

It localises to the membrane. Its function is as follows. Regulatory subunit of the calcium activated potassium KCNMA1 (maxiK) channel. Modulates the calcium sensitivity and gating kinetics of KCNMA1, thereby contributing to KCNMA1 channel diversity. Increases the apparent Ca(2+)/voltage sensitivity of the KCNMA1 channel. It also modifies KCNMA1 channel kinetics and alters its pharmacological properties. It slows down the activation and the deactivation kinetics of the channel. Acts as a negative regulator of smooth muscle contraction by enhancing the calcium sensitivity to KCNMA1. Its presence is also a requirement for internal binding of the KCNMA1 channel opener dehydrosoyasaponin I (DHS-1) triterpene glycoside and for external binding of the agonist hormone 17-beta-estradiol (E2). Increases the binding activity of charybdotoxin (CTX) toxin to KCNMA1 peptide blocker by increasing the CTX association rate and decreasing the dissociation rate. The sequence is that of Calcium-activated potassium channel subunit beta-1 (KCNMB1) from Homo sapiens (Human).